Here is a 1357-residue protein sequence, read N- to C-terminus: DNA-directed RNA polymerase subunit beta (1357 aa).

The protein belongs to the RNA polymerase beta chain family. As to quaternary structure, the RNAP catalytic core consists of 2 alpha, 1 beta, 1 beta' and 1 omega subunit. When a sigma factor is associated with the core the holoenzyme is formed, which can initiate transcription.

The enzyme catalyses RNA(n) + a ribonucleoside 5'-triphosphate = RNA(n+1) + diphosphate. DNA-dependent RNA polymerase catalyzes the transcription of DNA into RNA using the four ribonucleoside triphosphates as substrates. The polypeptide is DNA-directed RNA polymerase subunit beta (Pseudomonas aeruginosa (strain LESB58)).